Here is a 270-residue protein sequence, read N- to C-terminus: Cbp/p300-interacting transactivator 2 (270 aa).

The disordered stretch occupies residues 138 to 201; sequence LHPAAGHQMN…SGGGSGSGNM (64 aa). Residues 165-198 are compositionally biased toward gly residues; it reads STPGGSGGSSTPGGSGSSSGGGAGSSNSGGGSGS.

This sequence belongs to the CITED family. Interacts (via C-terminus) with SMAD2. Interacts (via C-terminus) with SMAD3 (via MH2 domain). Interacts with LHX2 (via LIM domains). Interacts with WT1. Interacts (via C-terminus) with EP300 (via CH1 domain); the interaction is stimulated in response to hypoxia. Interacts with PPARA. Interacts (via C-terminus) with TFAP2A, TFAP2B and TFAP2C.

The protein resides in the nucleus. In terms of biological role, transcriptional coactivator of the p300/CBP-mediated transcription complex. Acts as a bridge, linking TFAP2 transcription factors and the p300/CBP transcriptional coactivator complex in order to stimulate TFAP2-mediated transcriptional activation. Positively regulates TGF-beta signaling through its association with the SMAD/p300/CBP-mediated transcriptional coactivator complex. Stimulates the peroxisome proliferator-activated receptors PPARA transcriptional activity. Enhances estrogen-dependent transactivation mediated by estrogen receptors. Also acts as a transcriptional corepressor; interferes with the binding of the transcription factors HIF1A or STAT2 and the p300/CBP transcriptional coactivator complex. Participates in sex determination and early gonad development by stimulating transcription activation of SRY. Plays a role in controlling left-right patterning during embryogenesis; potentiates transcriptional activation of NODAL-mediated gene transcription in the left lateral plate mesoderm (LPM). Plays an essential role in differentiation of the adrenal cortex from the adrenogonadal primordium (AGP); stimulates WT1-mediated transcription activation thereby up-regulating the nuclear hormone receptor NR5A1 promoter activity. Associates with chromatin to the PITX2 P1 promoter region. This Homo sapiens (Human) protein is Cbp/p300-interacting transactivator 2 (CITED2).